A 308-amino-acid chain; its full sequence is Porphobilinogen deaminase (308 aa).

An S-(dipyrrolylmethanemethyl)cysteine modification is found at C241.

It belongs to the HMBS family. Monomer. Requires dipyrromethane as cofactor.

The catalysed reaction is 4 porphobilinogen + H2O = hydroxymethylbilane + 4 NH4(+). Its pathway is porphyrin-containing compound metabolism; protoporphyrin-IX biosynthesis; coproporphyrinogen-III from 5-aminolevulinate: step 2/4. In terms of biological role, tetrapolymerization of the monopyrrole PBG into the hydroxymethylbilane pre-uroporphyrinogen in several discrete steps. The polypeptide is Porphobilinogen deaminase (Staphylococcus epidermidis (strain ATCC 35984 / DSM 28319 / BCRC 17069 / CCUG 31568 / BM 3577 / RP62A)).